The following is a 632-amino-acid chain: tRNA uridine 5-carboxymethylaminomethyl modification enzyme MnmG (632 aa).

FAD-binding positions include 15-20 (GAGHAG), isoleucine 127, and serine 182. Residue 276–290 (GPRYCPSIEDKIVRF) coordinates NAD(+). Glutamine 373 lines the FAD pocket.

Belongs to the MnmG family. Homodimer. Heterotetramer of two MnmE and two MnmG subunits. FAD is required as a cofactor.

Its subcellular location is the cytoplasm. Its function is as follows. NAD-binding protein involved in the addition of a carboxymethylaminomethyl (cmnm) group at the wobble position (U34) of certain tRNAs, forming tRNA-cmnm(5)s(2)U34. The polypeptide is tRNA uridine 5-carboxymethylaminomethyl modification enzyme MnmG (Streptococcus pyogenes serotype M28 (strain MGAS6180)).